Reading from the N-terminus, the 114-residue chain is UPF0757 protein YmgG (114 aa).

The protein belongs to the UPF0757 family.

The polypeptide is UPF0757 protein YmgG (Edwardsiella ictaluri (strain 93-146)).